A 621-amino-acid chain; its full sequence is Pentatricopeptide repeat-containing protein At1g12620 (621 aa).

16 PPR repeats span residues 36 to 70 (GKVSYRERLRSGIVDIKEDDAVDLFQEMTRSRPRP), 71 to 105 (RLIDFSRLFSVVARTKQYDLVLDLCKQMELKGIAH), 106 to 140 (NLYTLSIMINCCCRCRKLSLAFSAMGKIIKLGYEP), 141 to 175 (DTVTFSTLINGLCLEGRVSEALELVDRMVEMGHKP), 176 to 210 (TLITLNALVNGLCLNGKVSDAVLLIDRMVETGFQP), 211 to 245 (NEVTYGPVLKVMCKSGQTALAMELLRKMEERKIKL), 246 to 280 (DAVKYSIIIDGLCKDGSLDNAFNLFNEMEIKGFKA), 281 to 315 (DIIIYTTLIRGFCYAGRWDDGAKLLRDMIKRKITP), 316 to 350 (DVVAFSALIDCFVKEGKLREAEELHKEMIQRGISP), 351 to 385 (DTVTYTSLIDGFCKENQLDKANHMLDLMVSKGCGP), 386 to 420 (NIRTFNILINGYCKANLIDDGLELFRKMSLRGVVA), 421 to 455 (DTVTYNTLIQGFCELGKLEVAKELFQEMVSRRVRP), 456 to 490 (DIVSYKILLDGLCDNGEPEKALEIFEKIEKSKMEL), 491 to 525 (DIGIYNIIIHGMCNASKVDDAWDLFCSLPLKGVKP), 526 to 560 (DVKTYNIMIGGLCKKGSLSEADLLFRKMEEDGHSP), and 561 to 595 (NGCTYNILIRAHLGEGDATKSAKLIEEIKRCGFSV).

Belongs to the PPR family. P subfamily.

This is Pentatricopeptide repeat-containing protein At1g12620 from Arabidopsis thaliana (Mouse-ear cress).